The primary structure comprises 615 residues: Nuclear receptor subfamily 1 group D member 1 (615 aa).

Residues M1 to G12 are compositionally biased toward polar residues. A required for phosphorylation by CSNK1E and cytoplasmic localization region spans residues M1–T70. Residues M1 to T120 form a disordered region. The tract at residues M1–M129 is modulating. The span at I14–S34 shows a compositional bias: low complexity. Over residues D35–C48 the composition is skewed to polar residues. The tract at residues P49–T285 is crucial for activation of GJA1. Phosphoserine; by GSK3-beta is present on residues S55 and S59. Over residues P72–S103 the composition is skewed to low complexity. The nuclear receptor DNA-binding region spans V130–F206. 2 consecutive NR C4-type zinc fingers follow at residues C133–C153 and C170–C194. Residues K192 and K193 each carry the N6-acetyllysine; by KAT5 modification. Disordered regions lie at residues L235–E287, P312–C337, and N357–N385. The segment covering P253 to T262 has biased composition (pro residues). The residue at position 275 (T275) is a Phosphothreonine; by CDK1. The region spanning T285–Q615 is the NR LBD domain. Position 401 is an N6-acetyllysine (K401). Heme is bound at residue C419. Residue K592 is modified to N6-acetyllysine. Residue H603 coordinates heme.

Belongs to the nuclear hormone receptor family. NR1 subfamily. Binds DNA as a monomer or a homodimer. Interacts with C1D, NR2E3, SP1 and ZNHIT1. Interacts with OPHN1 (via C-terminus). Interacts with PER2; the interaction associates PER2 to BMAL1 promoter region. Interacts with CRY1. Interacts with CCAR2. Interacts with SIAH2. Interacts with FBXW7 and CDK1. Interacts with HUWE1. Interacts with NR0B2. Interacts with NFIL3. Interacts (via domain NR LBD) with HSP90AA1 and HSP90AB1. In terms of processing, ubiquitinated, leading to its proteasomal degradation. Ubiquitinated by the SCF(FBXW7) complex when phosphorylated by CDK1 leading to its proteasomal degradation. Ubiquitinated by SIAH2; leading to its proteasomal degradation. Rapidly ubiquitinated in response to inflammatory triggers and sumoylation is a prerequisite to its ubiquitination. Sumoylated by UBE2I, desumoylated by SENP1, and sumoylation is a prerequisite to its ubiquitination. Post-translationally, phosphorylated by CSNK1E; phosphorylation enhances its cytoplasmic localization. In terms of processing, undergoes lysosome-mediated degradation in a time-dependent manner in the liver.

It localises to the nucleus. The protein localises to the cytoplasm. The protein resides in the cell projection. It is found in the dendrite. Its subcellular location is the dendritic spine. Functionally, transcriptional repressor which coordinates circadian rhythm and metabolic pathways in a heme-dependent manner. Integral component of the complex transcription machinery that governs circadian rhythmicity and forms a critical negative limb of the circadian clock by directly repressing the expression of core clock components BMAL1, CLOCK and CRY1. Also regulates genes involved in metabolic functions, including lipid and bile acid metabolism, adipogenesis, gluconeogenesis and the macrophage inflammatory response. Acts as a receptor for heme which stimulates its interaction with the NCOR1/HDAC3 corepressor complex, enhancing transcriptional repression. Recognizes two classes of DNA response elements within the promoter of its target genes and can bind to DNA as either monomers or homodimers, depending on the nature of the response element. Binds as a monomer to a response element composed of the consensus half-site motif 5'-[A/G]GGTCA-3' preceded by an A/T-rich 5' sequence (RevRE), or as a homodimer to a direct repeat of the core motif spaced by two nucleotides (RevDR-2). Acts as a potent competitive repressor of ROR alpha (RORA) function and regulates the levels of its ligand heme by repressing the expression of PPARGC1A, a potent inducer of heme synthesis. Regulates lipid metabolism by repressing the expression of APOC3 and by influencing the activity of sterol response element binding proteins (SREBPs); represses INSIG2 which interferes with the proteolytic activation of SREBPs which in turn govern the rhythmic expression of enzymes with key functions in sterol and fatty acid synthesis. Regulates gluconeogenesis via repression of G6PC1 and PEPCK and adipocyte differentiation via repression of PPARG. Regulates glucagon release in pancreatic alpha-cells via the AMPK-NAMPT-SIRT1 pathway and the proliferation, glucose-induced insulin secretion and expression of key lipogenic genes in pancreatic-beta cells. Positively regulates bile acid synthesis by increasing hepatic expression of CYP7A1 via repression of NR0B2 and NFIL3 which are negative regulators of CYP7A1. Modulates skeletal muscle oxidative capacity by regulating mitochondrial biogenesis and autophagy; controls mitochondrial biogenesis and respiration by interfering with the STK11-PRKAA1/2-SIRT1-PPARGC1A signaling pathway. Represses the expression of SERPINE1/PAI1, an important modulator of cardiovascular disease and the expression of inflammatory cytokines and chemokines in macrophages. Represses gene expression at a distance in macrophages by inhibiting the transcription of enhancer-derived RNAs (eRNAs). Plays a role in the circadian regulation of body temperature and negatively regulates thermogenic transcriptional programs in brown adipose tissue (BAT); imposes a circadian oscillation in BAT activity, increasing body temperature when awake and depressing thermogenesis during sleep. In concert with NR2E3, regulates transcriptional networks critical for photoreceptor development and function. In addition to its activity as a repressor, can also act as a transcriptional activator. In the ovarian granulosa cells acts as a transcriptional activator of STAR which plays a role in steroid biosynthesis. In collaboration with SP1, activates GJA1 transcription in a heme-independent manner. Represses the transcription of CYP2B10, CYP4A10 and CYP4A14. Represses the transcription of CES2. Represses and regulates the circadian expression of TSHB in a NCOR1-dependent manner. Negatively regulates the protein stability of NR3C1 and influences the time-dependent subcellular distribution of NR3C1, thereby affecting its transcriptional regulatory activity. Plays a critical role in the circadian control of neutrophilic inflammation in the lung; under resting, non-stress conditions, acts as a rhythmic repressor to limit inflammatory activity whereas in the presence of inflammatory triggers undergoes ubiquitin-mediated degradation thereby relieving inhibition of the inflammatory response. Plays a key role in the circadian regulation of microglial activation and neuroinflammation; suppresses microglial activation through the NF-kappaB pathway in the central nervous system. Plays a role in the regulation of the diurnal rhythms of lipid and protein metabolism in the skeletal muscle via transcriptional repression of genes controlling lipid and amino acid metabolism in the muscle. The protein is Nuclear receptor subfamily 1 group D member 1 (Nr1d1) of Rattus norvegicus (Rat).